The primary structure comprises 121 residues: Cell division protein FtsB (121 aa).

At 1–6 the chain is on the cytoplasmic side; sequence MRNWRW. A helical transmembrane segment spans residues 7 to 24; that stretch reads LLLVLAVLLAWLQYRFWF. Residues 25–121 lie on the Periplasmic side of the membrane; that stretch reads GPGNSGEVMM…AASADPVDHP (97 aa). Residues 31 to 66 are a coiled coil; the sequence is EVMMLEAQVAHQTRDNEGLRQRNQALAAEVKDLKDG. Residues 98 to 121 form a disordered region; it reads PPAAQEAAPPAQPPAASADPVDHP.

Belongs to the FtsB family. In terms of assembly, part of a complex composed of FtsB, FtsL and FtsQ.

It localises to the cell inner membrane. Functionally, essential cell division protein. May link together the upstream cell division proteins, which are predominantly cytoplasmic, with the downstream cell division proteins, which are predominantly periplasmic. This is Cell division protein FtsB from Xanthomonas campestris pv. campestris (strain 8004).